We begin with the raw amino-acid sequence, 439 residues long: Beta-1,3-galactosyl-O-glycosyl-glycoprotein beta-1,6-N-acetylglucosaminyltransferase (439 aa).

At 1–11 the chain is on the cytoplasmic side; it reads MVGWKKKKLCR. A helical; Signal-anchor for type II membrane protein transmembrane segment spans residues 12 to 29; that stretch reads GHHLWVLGCYMLLAVVSL. The Lumenal portion of the chain corresponds to 30-439; sequence RLSLRFKCDV…RHKAIYGTEL (410 aa). N-linked (GlcNAc...) asparagine; by host glycans are attached at residues Asn-71 and Asn-107. Disulfide bonds link Cys-72–Cys-229, Cys-163–Cys-383, Cys-184–Cys-211, and Cys-392–Cys-424.

The protein belongs to the glycosyltransferase 14 family.

It localises to the host Golgi apparatus membrane. The catalysed reaction is a 3-O-[beta-D-galactosyl-(1-&gt;3)-N-acetyl-alpha-D-galactosaminyl]-L-seryl-[protein] + UDP-N-acetyl-alpha-D-glucosamine = 3-O-{beta-D-galactosyl-(1-&gt;3)-[N-acetyl-beta-D-glucosaminyl-(1-&gt;6)]-N-acetyl-alpha-D-galactosaminyl}-L-seryl-[protein] + UDP + H(+). It catalyses the reaction a 3-O-[beta-D-galactosyl-(1-&gt;3)-N-acetyl-alpha-D-galactosaminyl]-L-threonyl-[protein] + UDP-N-acetyl-alpha-D-glucosamine = a 3-O-{beta-D-galactosyl-(1-&gt;3)-[N-acetyl-beta-D-glucosaminyl-(1-&gt;6)]-N-acetyl-alpha-D-galactosaminyl}-L-threonyl-[protein] + UDP + H(+). The enzyme catalyses a beta-D-Gal-(1-&gt;4)-beta-D-GlcNAc-(1-&gt;3)-beta-D-Gal-(1-&gt;4)-beta-D-GlcNAc derivative + UDP-N-acetyl-alpha-D-glucosamine = a beta-D-Gal-(1-&gt;4)-beta-D-GlcNAc-(1-&gt;3)-[beta-D-GlcNAc-(1-&gt;6)]-beta-D-Gal-(1-&gt;4)-N-acetyl-beta-D-glucosaminyl derivative + UDP + H(+). It carries out the reaction 3-O-[N-acetyl-beta-D-glucosaminyl-(1-&gt;3)-N-acetyl-alpha-D-galactosaminyl]-L-seryl-[protein] + UDP-N-acetyl-alpha-D-glucosamine = 3-O-[N-acetyl-beta-D-glucosaminyl-(1-&gt;3)-[N-acetyl-beta-D-glucosaminyl-(1-&gt;6)]-N-acetyl-alpha-D-galactosaminyl]-L-seryl-[protein] + UDP + H(+). The catalysed reaction is a 3-O-[N-acetyl-beta-D-glucosaminyl-(1-&gt;3)-N-acetyl-alpha-D-galactosaminyl]-L-threonyl-[protein] + UDP-N-acetyl-alpha-D-glucosamine = 3-O-[N-acetyl-beta-D-glucosaminyl-(1-&gt;3)-[N-acetyl-beta-D-glucosaminyl-(1-&gt;6)]-N-acetyl-alpha-D-galactosaminyl]-L-threonyl-[protein] + UDP + H(+). Its pathway is protein modification; protein glycosylation. Its function is as follows. Non-essential glycosyltransferase that can synthesize all known mucin beta 6 N-acetylglucosaminides. Mediates core 2 and core 4 O-glycan branching, 2 important steps in mucin-type biosynthesis. Has also I-branching enzyme activity by converting linear into branched poly-N-acetyllactosaminoglycans. Contributes to the post-translational modifications of structural proteins. In Bovine herpesvirus 4 (BoHV-4), this protein is Beta-1,3-galactosyl-O-glycosyl-glycoprotein beta-1,6-N-acetylglucosaminyltransferase (Bo17).